We begin with the raw amino-acid sequence, 586 residues long: BTB/POZ domain and ankyrin repeat-containing protein NPR1 (586 aa).

Residues 63–139 (SDADIVVEGI…VYTGKLKPSP (77 aa)) enclose the BTB domain. The segment at 142–156 (VSTCVHNVCAHDACR) adopts a C2HC NPR-type zinc-finger fold. Zn(2+)-binding residues include Cys-145, Cys-150, His-152, and Cys-155. 3 ANK repeats span residues 266–296 (KRIR…TLDE), 298–325 (NALH…DVNL), and 329–358 (RGYT…RASE). Positions 388–522 (EANKDRICID…LDKFIDDDLP (135 aa)) are salicylic acid-binding core (SBC). Arg-433 lines the salicylate pocket. Residues 561–586 (NLSGLSSSSSTTSPEKIGANQKVREP) are disordered. The segment covering 562–573 (LSGLSSSSSTTS) has biased composition (low complexity).

It belongs to the plant 'ANKYRIN-BTB/POZ' family. 'NPR1-like' subfamily. Highly expressed in leaves. Expressed at low levels in roots and stems.

Its subcellular location is the cytoplasm. It localises to the nucleus. The protein resides in the nuclear body. It participates in protein modification; protein ubiquitination. Functionally, salicylic acid (SA)-binding substrate-specific adapter of an E3 ubiquitin-protein ligase complex (CUL3-RBX1-BTB) which mediates the ubiquitination and subsequent proteasomal degradation of target proteins. Transcription cofactor that represses gene expression in the absence of salicylic acid (SA), when attached to negative cis-elements (W-box) with WRKY transcription factors, but stimulates gene expression upon activation by SA, when sumoylated and attached to positive cis-elements (as-1) with TGA transcription factors, thus confering immunity through a series of gene regulations ending in a significant increase in antimicrobial and defense genes expression. Probable component of the salicylic acid (SA) defense signaling pathway and pathogen-induced systemic acquired resistance (SAR). May be involved in disease resistance against fungal pathogens. May be involved in tolerance to salt and osmotic stresses. The protein is BTB/POZ domain and ankyrin repeat-containing protein NPR1 of Malus hupehensis (Chinese crab apple).